The chain runs to 132 residues: ATP synthase epsilon chain (132 aa).

Belongs to the ATPase epsilon chain family. In terms of assembly, F-type ATPases have 2 components, CF(1) - the catalytic core - and CF(0) - the membrane proton channel. CF(1) has five subunits: alpha(3), beta(3), gamma(1), delta(1), epsilon(1). CF(0) has three main subunits: a, b and c.

Its subcellular location is the cell membrane. Functionally, produces ATP from ADP in the presence of a proton gradient across the membrane. The polypeptide is ATP synthase epsilon chain (atpC) (Geobacillus stearothermophilus (Bacillus stearothermophilus)).